Here is a 201-residue protein sequence, read N- to C-terminus: Probable cobalt-precorrin-6B C(15)-methyltransferase (decarboxylating) (201 aa).

S-adenosyl-L-methionine-binding positions include Thr-28, 52-56 (GTGTG), Asp-76, and Ala-105.

The protein belongs to the methyltransferase superfamily. Archaeal-type CbiT family.

It carries out the reaction Co-precorrin-6B + S-adenosyl-L-methionine = Co-precorrin-7 + S-adenosyl-L-homocysteine + CO2. The protein operates within cofactor biosynthesis; adenosylcobalamin biosynthesis; cob(II)yrinate a,c-diamide from sirohydrochlorin (anaerobic route): step 8/10. Catalyzes the methylation of C-15 in cobalt-precorrin-6B followed by the decarboxylation of C-12 to form cobalt-precorrin-7. In Thermoplasma volcanium (strain ATCC 51530 / DSM 4299 / JCM 9571 / NBRC 15438 / GSS1), this protein is Probable cobalt-precorrin-6B C(15)-methyltransferase (decarboxylating).